The sequence spans 591 residues: V-type ATP synthase alpha chain (591 aa).

242 to 249 (GPFGAGKT) serves as a coordination point for ATP.

It belongs to the ATPase alpha/beta chains family.

The catalysed reaction is ATP + H2O + 4 H(+)(in) = ADP + phosphate + 5 H(+)(out). Produces ATP from ADP in the presence of a proton gradient across the membrane. The V-type alpha chain is a catalytic subunit. In Chlamydia trachomatis serovar L2 (strain ATCC VR-902B / DSM 19102 / 434/Bu), this protein is V-type ATP synthase alpha chain.